Reading from the N-terminus, the 372-residue chain is UDP-N-acetylglucosamine--N-acetylmuramyl-(pentapeptide) pyrophosphoryl-undecaprenol N-acetylglucosamine transferase (372 aa).

UDP-N-acetyl-alpha-D-glucosamine contacts are provided by residues 11 to 13, asparagine 123, arginine 160, serine 200, and glutamine 298; that span reads TAG.

It belongs to the glycosyltransferase 28 family. MurG subfamily.

Its subcellular location is the cell membrane. The catalysed reaction is di-trans,octa-cis-undecaprenyl diphospho-N-acetyl-alpha-D-muramoyl-L-alanyl-D-glutamyl-meso-2,6-diaminopimeloyl-D-alanyl-D-alanine + UDP-N-acetyl-alpha-D-glucosamine = di-trans,octa-cis-undecaprenyl diphospho-[N-acetyl-alpha-D-glucosaminyl-(1-&gt;4)]-N-acetyl-alpha-D-muramoyl-L-alanyl-D-glutamyl-meso-2,6-diaminopimeloyl-D-alanyl-D-alanine + UDP + H(+). It functions in the pathway cell wall biogenesis; peptidoglycan biosynthesis. Functionally, cell wall formation. Catalyzes the transfer of a GlcNAc subunit on undecaprenyl-pyrophosphoryl-MurNAc-pentapeptide (lipid intermediate I) to form undecaprenyl-pyrophosphoryl-MurNAc-(pentapeptide)GlcNAc (lipid intermediate II). This chain is UDP-N-acetylglucosamine--N-acetylmuramyl-(pentapeptide) pyrophosphoryl-undecaprenol N-acetylglucosamine transferase, found in Cutibacterium acnes (strain DSM 16379 / KPA171202) (Propionibacterium acnes).